Reading from the N-terminus, the 161-residue chain is Phosphopantetheine adenylyltransferase (161 aa).

T11 contributes to the substrate binding site. Residues 11–12 (TF) and H19 contribute to the ATP site. Substrate-binding residues include K43, T75, and R89. ATP is bound by residues 90-92 (GLR), E100, and 125-131 (YSFLSSS).

It belongs to the bacterial CoaD family. As to quaternary structure, homohexamer. Mg(2+) is required as a cofactor.

The protein localises to the cytoplasm. It carries out the reaction (R)-4'-phosphopantetheine + ATP + H(+) = 3'-dephospho-CoA + diphosphate. It participates in cofactor biosynthesis; coenzyme A biosynthesis; CoA from (R)-pantothenate: step 4/5. Functionally, reversibly transfers an adenylyl group from ATP to 4'-phosphopantetheine, yielding dephospho-CoA (dPCoA) and pyrophosphate. The sequence is that of Phosphopantetheine adenylyltransferase from Listeria innocua serovar 6a (strain ATCC BAA-680 / CLIP 11262).